A 242-amino-acid chain; its full sequence is Uridylate kinase (242 aa).

Residue 13 to 16 (KLSG) coordinates ATP. Gly-55 lines the UMP pocket. Residues Gly-56 and Arg-60 each contribute to the ATP site. UMP contacts are provided by residues Asp-75 and 136–143 (TGNPFFTT). Thr-163, Tyr-169, and Asp-172 together coordinate ATP.

This sequence belongs to the UMP kinase family. Homohexamer.

Its subcellular location is the cytoplasm. It catalyses the reaction UMP + ATP = UDP + ADP. It participates in pyrimidine metabolism; CTP biosynthesis via de novo pathway; UDP from UMP (UMPK route): step 1/1. Its activity is regulated as follows. Inhibited by UTP. Catalyzes the reversible phosphorylation of UMP to UDP. This is Uridylate kinase from Zymomonas mobilis subsp. mobilis (strain ATCC 31821 / ZM4 / CP4).